An 888-amino-acid chain; its full sequence is Endochitinase A1 (888 aa).

The signal sequence occupies residues 1–22 (MVSSKLSFVATAVAALAPLASA). The GH18 domain maps to 29-338 (SNLAIYWGQG…DHMKDILLHC (310 aa)). Catalysis depends on E174, which acts as the Proton donor. Disordered regions lie at residues 338-631 (CDPS…TTTA), 743-799 (PVTE…VSTS), and 813-855 (PLIL…YTQE). The span at 344 to 617 (VTSSSAIPSS…STDESSTTVG (274 aa)) shows a compositional bias: low complexity. A glycan (N-linked (GlcNAc...) asparagine) is linked at N622. Polar residues predominate over residues 764–775 (EGSNPTQPSGAS). A glycan (N-linked (GlcNAc...) asparagine) is linked at N780. Over residues 835–855 (PSGQNSGSSSHVPIPPSYTQE) the composition is skewed to polar residues. The GPI-anchor amidated glycine moiety is linked to residue G863. Positions 864–888 (AASRVTGLGHGLVLTVLTLSAFFVL) are cleaved as a propeptide — removed in mature form.

It belongs to the glycosyl hydrolase 18 family. Chitinase class III subfamily.

Its subcellular location is the cell membrane. It localises to the secreted. The protein resides in the cell wall. It carries out the reaction Random endo-hydrolysis of N-acetyl-beta-D-glucosaminide (1-&gt;4)-beta-linkages in chitin and chitodextrins.. Its activity is regulated as follows. The cyclic peptide natural product argifin acts as a specific inhibitor. In terms of biological role, GPI-anchored chitinase involved in the degradation of chitin, a component of the cell walls of fungi and exoskeletal elements of some animals (including worms and arthropods). Required to reshape the cell wall at the sites where cell wall remodeling and/or cell wall maturation actively take place such as sites of conidia formation. This Aspergillus fumigatus (strain ATCC MYA-4609 / CBS 101355 / FGSC A1100 / Af293) (Neosartorya fumigata) protein is Endochitinase A1 (chiA1).